A 543-amino-acid chain; its full sequence is Glutamyl-tRNA(Gln) amidotransferase subunit B-1, chloroplastic/mitochondrial (543 aa).

Positions 1-47 (MIRAGGPSPSPRGRRAGPIRLPRRAPSSTPTRAKTEEKASADASSRT) are disordered. Positions 12–23 (RGRRAGPIRLPR) are enriched in basic residues.

This sequence belongs to the GatB/GatE family. GatB subfamily. In terms of assembly, subunit of the heterotrimeric GatCAB amidotransferase (AdT) complex, composed of A, B and C subunits.

The protein localises to the mitochondrion. It localises to the plastid. It is found in the chloroplast. It carries out the reaction L-glutamyl-tRNA(Gln) + L-glutamine + ATP + H2O = L-glutaminyl-tRNA(Gln) + L-glutamate + ADP + phosphate + H(+). Allows the formation of correctly charged Gln-tRNA(Gln) through the transamidation of misacylated Glu-tRNA(Gln) in chloroplasts and mitochondria. The reaction takes place in the presence of glutamine and ATP through an activated gamma-phospho-Glu-tRNA(Gln). The chain is Glutamyl-tRNA(Gln) amidotransferase subunit B-1, chloroplastic/mitochondrial from Micromonas commoda (strain RCC299 / NOUM17 / CCMP2709) (Picoplanktonic green alga).